The following is a 362-amino-acid chain: Protein mab-21-like 3 (362 aa).

This sequence belongs to the mab-21 family.

In Homo sapiens (Human), this protein is Protein mab-21-like 3 (MAB21L3).